A 243-amino-acid polypeptide reads, in one-letter code: Cysteine-rich secretory protein 2 (243 aa).

The N-terminal stretch at M1 to G21 is a signal peptide. The 129-residue stretch at V41–Y169 folds into the SCP domain. 5 disulfides stabilise this stretch: C189–C196, C192–C201, C205–C238, C214–C232, and C223–C236. The 34-residue stretch at C205 to C238 folds into the ShKT domain.

It belongs to the CRISP family. In terms of assembly, interacts with NSUN4 isoform 3. In terms of tissue distribution, testis and epididymis.

It localises to the secreted. Its function is as follows. May regulate some ion channels' activity and thereby regulate calcium fluxes during sperm capacitation. This is Cysteine-rich secretory protein 2 (CRISP2) from Homo sapiens (Human).